Consider the following 301-residue polypeptide: Transposase InsD for insertion element IS2D (301 aa).

The 184-residue stretch at 106–289 (KPAVPPSKRA…SPREYLRQRA (184 aa)) folds into the Integrase catalytic domain.

Its function is as follows. Involved in the transposition of the insertion sequence IS2. The chain is Transposase InsD for insertion element IS2D (insD2) from Escherichia coli (strain K12).